Here is a 364-residue protein sequence, read N- to C-terminus: Medium-wave-sensitive opsin 1 (364 aa).

Positions 1–23 (MTQPWGPQMLAGGQPPESHEDST) are disordered. Topologically, residues 1–52 (MTQPWGPQMLAGGQPPESHEDSTQASIFTYTNSNSTRGPFEGPNFHIAPRWV) are extracellular. The interval 17–43 (ESHEDSTQASIFTYTNSNSTRGPFEGP) is required for 11-cis-retinal regeneration. Residue N34 is glycosylated (N-linked (GlcNAc...) asparagine). A helical membrane pass occupies residues 53-77 (YHLTSAWMILVVIASVFTNGLVLVA). Over 78-89 (TMRFKKLRHPLN) the chain is Cytoplasmic. The chain crosses the membrane as a helical span at residues 90 to 115 (WILVNLAVADLAETVIASTISVVNQF). The Extracellular segment spans residues 116-129 (YGYFVLGHPLCVVE). A disulfide bridge connects residues C126 and C203. The chain crosses the membrane as a helical span at residues 130–149 (GYTVSLCGITGLWSLAIISW). The Cytoplasmic segment spans residues 150–168 (ERWLVVCKPFGNVRFDAKL). Residues 169-192 (AIAGIAFSWIWAAVWTAPPIFGWS) form a helical membrane-spanning segment. At 193 to 218 (RYWPYGLKTSCGPDVFSGTSYPGVQS) the chain is on the extracellular side. Residues 219–246 (YMMVLMVTCCIIPLSVIVLCYLQVWMAI) traverse the membrane as a helical segment. The Cytoplasmic segment spans residues 247-268 (RTVAKQQKESESTQKAEKEVTR). Residues 269–292 (MVVVMVFAYCLCWGPYTFFACFAT) form a helical membrane-spanning segment. The Extracellular segment spans residues 293 to 300 (AHPGYSFH). A helical membrane pass occupies residues 301–325 (PLVAAIPSYFAKSATIYNPIIYVFM). K312 is modified (N6-(retinylidene)lysine). Over 326-364 (NRQFRNCILQLFGKKVEDSSELSSASRTEASSVSSVSPA) the chain is Cytoplasmic.

This sequence belongs to the G-protein coupled receptor 1 family. Opsin subfamily. In terms of assembly, monomer. Homodimer. Homotetramer. O-glycosylated. In terms of processing, phosphorylated on some or all of the serine and threonine residues present in the C-terminal region. In terms of tissue distribution, expressed in cone photoreceptor cells.

The protein localises to the membrane. Its function is as follows. Visual pigments are the light-absorbing molecules that mediate vision. They consist of an apoprotein, opsin, covalently linked to cis-retinal. May increase spectral sensitivity in dim light. The protein is Medium-wave-sensitive opsin 1 (OPN1MW) of Oryctolagus cuniculus (Rabbit).